A 291-amino-acid polypeptide reads, in one-letter code: MAGMKEIRGKIKSVQNTRKITKAMEMVAASKMRRAQERMRAARPYAEKVRAIAAHMSRANPEYRHPFMVANDGVKTAGMILVTTDKGLCGGLNTNVLRASLQKFKELEEQGQKVEATAIGGKGLGFLNRFGAKVISQVVHLGDTPHLDKLIGAVKTQLDLYSEGKLSAVYLAYTRFVNTMKQETVIEQLLPLSSEHFDANDGTPATSWDYIYEPDAQAVVDELLVRYVEALVYQAVAENMASEQSARMVAMKAASDNAKTVISELQLSYNKSRQAAITKELSEIVGGAAAV.

It belongs to the ATPase gamma chain family. In terms of assembly, F-type ATPases have 2 components, CF(1) - the catalytic core - and CF(0) - the membrane proton channel. CF(1) has five subunits: alpha(3), beta(3), gamma(1), delta(1), epsilon(1). CF(0) has three main subunits: a, b and c.

The protein localises to the cell inner membrane. Functionally, produces ATP from ADP in the presence of a proton gradient across the membrane. The gamma chain is believed to be important in regulating ATPase activity and the flow of protons through the CF(0) complex. This is ATP synthase gamma chain from Burkholderia mallei (strain NCTC 10247).